A 112-amino-acid polypeptide reads, in one-letter code: Nitrogen regulatory protein GlnK2 (112 aa).

ADP is bound by residues threonine 29, 38–39, valine 64, and 87–90; these read QQ and GDGK. Residues threonine 29, 38–39, valine 64, 87–90, and 101–103 contribute to the ATP site; these read QQ, GDGK, and RIR.

The protein belongs to the P(II) protein family. Homotrimer. Interacts and forms a complex with Amt2.

The protein localises to the cytoplasm. Binding of adenosine nucleotides results in distinct, cooperative behavior for ATP and ADP. GlnK2 is completely insensitive to 2-oxoglutarate at a low level of intracellular nitrogen. Functionally, involved in the regulation of nitrogen metabolism. Regulates the activity of its targets by protein-protein interaction in response to the nitrogen status of the cell. Regulates the activity of the ammonia channel Amt2 via direct interaction. The protein is Nitrogen regulatory protein GlnK2 of Archaeoglobus fulgidus (strain ATCC 49558 / DSM 4304 / JCM 9628 / NBRC 100126 / VC-16).